A 299-amino-acid chain; its full sequence is GTP cyclohydrolase FolE2 (299 aa).

Belongs to the GTP cyclohydrolase IV family.

It carries out the reaction GTP + H2O = 7,8-dihydroneopterin 3'-triphosphate + formate + H(+). Its pathway is cofactor biosynthesis; 7,8-dihydroneopterin triphosphate biosynthesis; 7,8-dihydroneopterin triphosphate from GTP: step 1/1. Converts GTP to 7,8-dihydroneopterin triphosphate. In Klebsiella pneumoniae, this protein is GTP cyclohydrolase FolE2.